A 585-amino-acid chain; its full sequence is Sodium/calcium exchanger NCL (585 aa).

The next 5 helical transmembrane spans lie at 83–103, 106–126, 149–169, 212–232, and 239–259; these read VFLI…LSAG, LLLE…MLGA, VSVG…VIWG, IMAI…LGST, and VLIA…YQVF. 2 EF-hand domains span residues 299 to 334 and 339 to 374; these read PDEH…ISFE and DKDD…WLIQ. Residues Asp312, Asn314, Asp316, His318, Glu323, Asp352, Asp356, Gln358, and Glu363 each contribute to the Ca(2+) site. The next 2 membrane-spanning stretches (helical) occupy residues 427–447 and 457–477; these read WITI…AAFA and FSAA…PLAT. A glycan (N-linked (GlcNAc...) asparagine) is linked at Asn478. Transmembrane regions (helical) follow at residues 505–525, 532–552, and 558–578; these read CGGV…IVYV, FSSE…FASF, and LWTC…VYIL.

This sequence belongs to the Ca(2+):cation antiporter (CaCA) (TC 2.A.19) family. Expressed in roots, leaves, stems, petals, stamens, ovules and siliques.

Its subcellular location is the cell membrane. The protein localises to the vacuole membrane. In terms of biological role, possesses sodium/calcium exchanger (NCX) activity when expressed in a heterologous mammalian CHO-K1 cell system. Does not possess cation/proton exchanger (CAX) or sodium/proton (NHX) activity when expressed in a heterologous yeast cell system. Has the ability to bind calcium in vitro. Participates in the maintenance of calcium homeostasis. May play a role in auxin response, diurnal rhythm and flowering time. Involved in salt stress response. The chain is Sodium/calcium exchanger NCL from Arabidopsis thaliana (Mouse-ear cress).